A 463-amino-acid chain; its full sequence is Cysteine--tRNA ligase (463 aa).

Zn(2+) is bound at residue Cys-29. A 'HIGH' region motif is present at residues 31 to 41 (MTIYDLCHIGH). Cys-218, His-243, and Glu-247 together coordinate Zn(2+). Positions 275–279 (KMSKS) match the 'KMSKS' region motif. Lys-278 contacts ATP.

This sequence belongs to the class-I aminoacyl-tRNA synthetase family. Monomer. The cofactor is Zn(2+).

The protein resides in the cytoplasm. The catalysed reaction is tRNA(Cys) + L-cysteine + ATP = L-cysteinyl-tRNA(Cys) + AMP + diphosphate. This Polaromonas naphthalenivorans (strain CJ2) protein is Cysteine--tRNA ligase.